The chain runs to 489 residues: MRVLHVCSELYPILKTGGLADVTAALPPALASFGVDSRVLVPGFPAFINAIKDKQLLINIPSRFGAEEINIFLAKVPNTKIDIYVIDAPSLFARPGNPYADSSNQAYADNYLRFALLGWIAARISEGLDAKWKPEIVHSHDWHAGLVPAYIKASELASGKKAVKTVFTVHNLAYQGLFPMSVFAELDLPGIFLSMNGLEFYGQVSFMKAGLYFADKITTVSPTYAKEIQTYEQGCGLEGLLADRHNDLYGVLNGVDPQIWNPKKDSLIATNYSSTTVATGKAKCKLALQQMMGLAEKEDALLFGIVTRLTEQKGLNLLVEAIGEITSRGGQVVLLGSGDKALEEVFLAAAKKYPKSIAVQIGYDEEQAHRIIAGSDVIMVPSRFEPCGLTQLYGLTYGTLPLVHKVGGLADTVTDSSLENLADGTATGFVFDEFSVESLTLAIRRAFALYNRKTDWKKVRKTAMQQQVTWDSSAEKIYQIYKNLVRENN.

Lys15 provides a ligand contact to ADP-alpha-D-glucose.

The protein belongs to the glycosyltransferase 1 family. Bacterial/plant glycogen synthase subfamily.

It catalyses the reaction [(1-&gt;4)-alpha-D-glucosyl](n) + ADP-alpha-D-glucose = [(1-&gt;4)-alpha-D-glucosyl](n+1) + ADP + H(+). It participates in glycan biosynthesis; glycogen biosynthesis. Functionally, synthesizes alpha-1,4-glucan chains using ADP-glucose. This chain is Glycogen synthase, found in Francisella tularensis subsp. novicida (strain U112).